The chain runs to 443 residues: Phosphoglucosamine mutase (443 aa).

Ser102 serves as the catalytic Phosphoserine intermediate. Mg(2+) contacts are provided by Ser102, Asp241, Asp243, and Asp245. Ser102 bears the Phosphoserine mark.

Belongs to the phosphohexose mutase family. Mg(2+) serves as cofactor. In terms of processing, activated by phosphorylation.

The enzyme catalyses alpha-D-glucosamine 1-phosphate = D-glucosamine 6-phosphate. Its function is as follows. Catalyzes the conversion of glucosamine-6-phosphate to glucosamine-1-phosphate. This is Phosphoglucosamine mutase from Albidiferax ferrireducens (strain ATCC BAA-621 / DSM 15236 / T118) (Rhodoferax ferrireducens).